A 502-amino-acid chain; its full sequence is Histidine--tRNA ligase (502 aa).

Belongs to the class-II aminoacyl-tRNA synthetase family. As to quaternary structure, homodimer.

The protein resides in the cytoplasm. It carries out the reaction tRNA(His) + L-histidine + ATP = L-histidyl-tRNA(His) + AMP + diphosphate + H(+). The chain is Histidine--tRNA ligase from Brucella ovis (strain ATCC 25840 / 63/290 / NCTC 10512).